An 86-amino-acid polypeptide reads, in one-letter code: NAD(P)H-quinone oxidoreductase subunit O (86 aa).

The protein belongs to the complex I NdhO subunit family. In terms of assembly, NDH-1 can be composed of about 15 different subunits; different subcomplexes with different compositions have been identified which probably have different functions.

The protein resides in the cellular thylakoid membrane. It catalyses the reaction a plastoquinone + NADH + (n+1) H(+)(in) = a plastoquinol + NAD(+) + n H(+)(out). It carries out the reaction a plastoquinone + NADPH + (n+1) H(+)(in) = a plastoquinol + NADP(+) + n H(+)(out). In terms of biological role, NDH-1 shuttles electrons from an unknown electron donor, via FMN and iron-sulfur (Fe-S) centers, to quinones in the respiratory and/or the photosynthetic chain. The immediate electron acceptor for the enzyme in this species is believed to be plastoquinone. Couples the redox reaction to proton translocation, and thus conserves the redox energy in a proton gradient. Cyanobacterial NDH-1 also plays a role in inorganic carbon-concentration. This is NAD(P)H-quinone oxidoreductase subunit O from Prochlorococcus marinus (strain SARG / CCMP1375 / SS120).